Here is a 261-residue protein sequence, read N- to C-terminus: X-box-binding protein 1 (261 aa).

Residues 1–185 (MVVVAPAQSP…VQAQLSPLQN (185 aa)) lie on the Cytoplasmic side of the membrane. Low complexity predominate over residues 27 to 37 (TGGAPAGRALP). Residues 27-65 (TGGAPAGRALPVMVPGQQGASPEGASGVPPQARKRQRLT) are disordered. 2 positions are modified to phosphoserine: Ser47 and Ser68. Positions 70–133 (EEKALRRKLK…HGLVVENQEL (64 aa)) constitute a bZIP domain. The basic motif stretch occupies residues 72–94 (KALRRKLKNRVAAQTARDRKKAR). The tract at residues 76–92 (RKLKNRVAAQTARDRKK) is nuclear localization signal (NLS). Residues 98 to 133 (LEQQVVDLEEENQKLLLENQLLREKTHGLVVENQEL) are leucine-zipper. The chain crosses the membrane as a helical; Signal-anchor for type II membrane protein span at residues 186 to 203 (ISPWTLMALTLQTLSLTS). At 204–261 (CWAFCSTWTQSCSSDVLPQSLPAWSSSQKWTQKDPVPYRPPLLHPWGRHQPSWKPLMN) the chain is on the lumenal side.

This sequence belongs to the bZIP family. In terms of assembly, isoform 1 interacts with HM13. Isoform 1 interacts with RNF139; the interaction induces ubiquitination and degradation of isoform 1. Isoform 1 interacts (via luminal domain) with DERL1; the interaction obviates the need for ectodomain shedding prior HM13/SPP-mediated XBP1 isoform 1 cleavage. Isoform 1 interacts with HDAC3 and AKT1; the interactions occur in endothelial cell (EC) under disturbed flow. Isoform 1 interacts with the oncoprotein FOS. Interacts with SIRT1. Isoform 1 is ubiquitinated, leading to proteasome-mediated degradation in response to ER stress. Post-translationally, X-box-binding protein 1, cytoplasmic form and luminal form are produced by intramembrane proteolytic cleavage of ER membrane-anchored isoform 1 triggered by HM13/SPP in a DERL1-RNF139-dependent and VCP/p97-independent manner. X-box-binding protein 1, luminal form is ubiquitinated leading to proteasomal degradation. In terms of processing, acetylated by EP300; acetylation positively regulates the transcriptional activity of XBP1. Deacetylated by SIRT1; deacetylation negatively regulates the transcriptional activity of XBP1.

It is found in the nucleus. It localises to the endoplasmic reticulum. The protein resides in the cytoplasm. The protein localises to the endoplasmic reticulum membrane. Its subcellular location is the membrane. In terms of biological role, functions as a transcription factor during endoplasmic reticulum (ER) stress by regulating the unfolded protein response (UPR). Required for cardiac myogenesis and hepatogenesis during embryonic development, and the development of secretory tissues such as exocrine pancreas and salivary gland. Involved in terminal differentiation of B lymphocytes to plasma cells and production of immunoglobulins. Modulates the cellular response to ER stress in a PIK3R-dependent manner. Binds to the cis-acting X box present in the promoter regions of major histocompatibility complex class II genes. Involved in VEGF-induced endothelial cell (EC) proliferation and retinal blood vessel formation during embryonic development but also for angiogenesis in adult tissues under ischemic conditions. Functions also as a major regulator of the UPR in obesity-induced insulin resistance and type 2 diabetes for the management of obesity and diabetes prevention. Functionally, acts as a weak transcriptional factor. Together with HDAC3, contributes to the activation of NFE2L2-mediated HMOX1 transcription factor gene expression in a PI(3)K/mTORC2/Akt-dependent signaling pathway leading to EC survival under disturbed flow/oxidative stress. Binds to the ER stress response element (ERSE) upon ER stress. Binds to the consensus 5'-GATGACGTG[TG]N(3)[AT]T-3' sequence related to cAMP responsive element (CRE)-like sequences. Associates preferentially to the HDAC3 gene promoter region in a static flow-dependent manner. Binds to the CDH5/VE-cadherin gene promoter region. The protein is X-box-binding protein 1 of Bos taurus (Bovine).